The chain runs to 1093 residues: Synaptopodin-2 (1093 aa).

The interval 1 to 180 is interaction with VPS18; it reads MGTGDFICIS…PDSQRGRVAE (180 aa). A PDZ domain is found at 6–88; that stretch reads FICISMTGGA…SLQMLIKRPS (83 aa). 2 disordered regions span residues 144–174 and 211–233; these read ENQRSGPDCAGSLKEETGPSYQRAPQMPDSQ and ASGPLVALPGAEKSKSPDPDPNL. The segment covering 222-233 has biased composition (basic and acidic residues); it reads EKSKSPDPDPNL. 4 positions are modified to phosphoserine: serine 274, serine 310, serine 329, and serine 330. The tract at residues 329 to 369 is disordered; it reads SSEGTEQGEDPRSEKDHSRPHKHRARHARLRRSESLSEKQV. Residue threonine 333 is modified to Phosphothreonine. Over residues 346 to 358 the composition is skewed to basic residues; sequence SRPHKHRARHARL. Residues 359-369 are compositionally biased toward basic and acidic residues; the sequence is RRSESLSEKQV. Positions 398–406 match the Nuclear localization signal motif; that stretch reads KKRRRRARK. Interaction with ACTN2 regions lie at residues 481 to 663, 664 to 924, and 901 to 1093; these read MEML…FYDS, SERI…PPVA, and QSPT…VVEE. Disordered regions lie at residues 507 to 803 and 834 to 870; these read AQKE…GTVV and AVASQNYTPKPTVSTPTVNAVQPGAVGPSNELPGMSG. 2 F-actin binding regions span residues 534 to 663 and 664 to 803; these read TSYQ…FYDS and SERI…GTVV. Serine 548, serine 549, and serine 551 each carry phosphoserine. 2 stretches are compositionally biased toward polar residues: residues 565–579 and 595–611; these read PQQNGFSGTSETANI and SVNQPATPFSPTRNMTS. Position 604 is a phosphoserine (serine 604). An interaction with YWHAB region spans residues 607-811; it reads RNMTSPIADF…VVSSIKIAQP (205 aa). The residue at position 610 (threonine 610) is a Phosphothreonine. Serine 611 bears the Phosphoserine mark. The tract at residues 615-626 is interaction with BAG3; it reads DFPAPPPYSAVT. Pro residues-rich tracts occupy residues 617–630 and 644–655; these read PAPPPYSAVTPPPD and AQPPPWPQPAPW. A PPPY motif motif is present at residues 619-622; it reads PPPY. A Phosphotyrosine modification is found at tyrosine 622. The residue at position 626 (threonine 626) is a Phosphothreonine. Residues 663–674 show a composition bias toward basic and acidic residues; it reads SSERIASRDERI. The F-actin bundling activity stretch occupies residues 664–916; it reads SERIASRDER…LPASWKYSSN (253 aa). A phosphoserine mark is found at serine 705 and serine 729. Positions 751–900 are actin binding; the sequence is AKQKTPPPVA…DTVQAHAARA (150 aa). 2 positions are modified to phosphothreonine: threonine 755 and threonine 774. A compositionally biased stretch (low complexity) spans 762–784; it reads KPAVKSSSSQPVTPVSPVWSPGV. Residues serine 777 and serine 781 each carry the phosphoserine modification. Polar residues-rich tracts occupy residues 793–803 and 835–853; these read PTSNPSKGTVV and VASQNYTPKPTVSTPTVNA. Residues 810-1093 form an interaction with FLNC region; it reads QPSYPPARPA…QVWKPSVVEE (284 aa). Serine 902, serine 906, and serine 910 each carry phosphoserine. The interval 937–956 is disordered; the sequence is ALKSQPSAAQPSKMGKKKGK. The tract at residues 1000 to 1019 is interaction with ZYX; the sequence is LAMKQALPPRPVNAASPTNV. The residue at position 1015 (serine 1015) is a Phosphoserine. Residues 1041-1050 show a composition bias toward low complexity; it reads SSPVSASPVP. Positions 1041-1064 are disordered; it reads SSPVSASPVPVGIPTSPKQESASS. A Phosphoserine modification is found at serine 1056.

This sequence belongs to the synaptopodin family. May self-associate in muscle cells under oxidative stress. Binds F-actin. Interacts with ACTN2; ACTN2 is proposed to anchor SYOP2 at Z lines in mature myocytes. Interacts with AKAP6, PPP3CA and CAMK2A. Interacts (phosphorylated form) with YWHAB; YWHAB competes with ACTN2 for interaction with SYNPO2. Interacts with KPNA2; mediating nuclear import of SYNOP2; dependent on interaction with YWHAB. Interacts with IPO13; may be implicated in SYNOP2 nuclear import. Interacts with ZYX, FLNC, ILK. Interacts with BAG3 (via WW 1 domain). May associate with the CASA complex consisting of HSPA8, HSPB8 and BAG3. Interacts with VPS18. Post-translationally, phosphorylated by PKA, and by CaMK2 at multiple sites. Dephosphorylated by calcineurin; abrogating interaction with YWHAB and impairing nuclear import. Phosphorylated by ILK. As to expression, expressed in heart muscle. Isoform 5 is specifically expressed in skeletal muscle.

The protein resides in the nucleus. It localises to the cytoplasm. The protein localises to the cytoskeleton. Its subcellular location is the myofibril. It is found in the sarcomere. The protein resides in the z line. It localises to the cell junction. The protein localises to the focal adhesion. Functionally, has an actin-binding and actin-bundling activity. Can induce the formation of F-actin networks in an isoform-specific manner. At the sarcomeric Z lines is proposed to act as adapter protein that links nascent myofibers to the sarcolemma via ZYX and may play a role in early assembly and stabilization of the Z lines. Involved in autophagosome formation. May play a role in chaperone-assisted selective autophagy (CASA) involved in Z lines maintenance in striated muscle under mechanical tension; may link the client-processing CASA chaperone machinery to a membrane-tethering and fusion complex providing autophagosome membranes. Involved in regulation of cell migration. May be a tumor suppressor. In terms of biological role, involved in regulation of cell migration. Can induce formation of thick, irregular actin bundles in the cell body. Its function is as follows. Involved in regulation of cell migration. Can induce long, well-organized actin bundles frequently orientated in parallel along the long axis of the cell showing characteristics of contractile ventral stress fibers. Involved in regulation of cell migration. Can induce an amorphous actin meshwork throughout the cell body containing a mixture of long and short, randomly organized thick and thin actin bundles. Functionally, can induce long, well-organized actin bundles frequently orientated in parallel along the long axis of the cell showing characteristics of contractile ventral stress fibers. In terms of biological role, involved in regulation of cell migration in part dependent on the Rho-ROCK cascade; can promote formation of nascent focal adhesions, actin bundles at the leading cell edge and lamellipodia. Can induce formation of thick, irregular actin bundles in the cell body; the induced actin network is associated with enhanced cell migration in vitro. This chain is Synaptopodin-2 (SYNPO2), found in Homo sapiens (Human).